The primary structure comprises 1420 residues: DNA-directed RNA polymerase subunit beta' (1420 aa).

Zn(2+) contacts are provided by C72, C74, C87, and C90. Mg(2+) is bound by residues D462, D464, and D466. The Zn(2+) site is built by C816, C896, C903, and C906.

The protein belongs to the RNA polymerase beta' chain family. As to quaternary structure, the RNAP catalytic core consists of 2 alpha, 1 beta, 1 beta' and 1 omega subunit. When a sigma factor is associated with the core the holoenzyme is formed, which can initiate transcription. The cofactor is Mg(2+). It depends on Zn(2+) as a cofactor.

The catalysed reaction is RNA(n) + a ribonucleoside 5'-triphosphate = RNA(n+1) + diphosphate. DNA-dependent RNA polymerase catalyzes the transcription of DNA into RNA using the four ribonucleoside triphosphates as substrates. The sequence is that of DNA-directed RNA polymerase subunit beta' from Blochmanniella floridana.